A 333-amino-acid polypeptide reads, in one-letter code: Homeobox protein engrailed-1 (333 aa).

Residues 1 to 14 show a composition bias toward basic and acidic residues; it reads MEEPPEGHGHHRDA. 2 disordered regions span residues 1–184 and 226–247; these read MEEP…AAKY and RPSS…DKRP. The span at 20–31 shows a compositional bias: gly residues; the sequence is ANGGGGGGGGSD. Residues 38–66 are compositionally biased toward pro residues; that stretch reads SPSPAPASPAAPCPLPLPRRRPPPPPPPR. The span at 94 to 104 shows a compositional bias: gly residues; that stretch reads TGAGGGGGGGG. Over residues 144–173 the composition is skewed to low complexity; it reads DGSAPAGTAAKANPGTAAGAAGAAGAAKAQ. A DNA-binding region (homeobox) is located at residues 244–303; sequence DKRPRTAFTAEQLQRLKAEFQANRYITEQRRQSLAQELSLNESRVKIWFQNKRAKIKKAT.

This sequence belongs to the engrailed homeobox family.

It is found in the nucleus. In terms of biological role, required for proper formation of the apical ectodermal ridge and correct dorsal-ventral patterning in the limb. The polypeptide is Homeobox protein engrailed-1 (EN1) (Gallus gallus (Chicken)).